The chain runs to 154 residues: Transcriptional repressor NrdR (154 aa).

A zinc finger lies at 3 to 34; the sequence is CPFCGHAATQVIDTRMSEEGDTVRRRRRCESC. In terms of domain architecture, ATP-cone spans 49–139; that stretch reads PAVVKKNGSR…VYRSFEDLAE (91 aa).

It belongs to the NrdR family. Requires Zn(2+) as cofactor.

Its function is as follows. Negatively regulates transcription of bacterial ribonucleotide reductase nrd genes and operons by binding to NrdR-boxes. The chain is Transcriptional repressor NrdR from Ralstonia pickettii (strain 12J).